The primary structure comprises 159 residues: Ribosomal RNA large subunit methyltransferase H (159 aa).

Residues Leu-76, Gly-108, and 127 to 132 each bind S-adenosyl-L-methionine; that span reads FSKMTF.

This sequence belongs to the RNA methyltransferase RlmH family. As to quaternary structure, homodimer.

Its subcellular location is the cytoplasm. The catalysed reaction is pseudouridine(1915) in 23S rRNA + S-adenosyl-L-methionine = N(3)-methylpseudouridine(1915) in 23S rRNA + S-adenosyl-L-homocysteine + H(+). Specifically methylates the pseudouridine at position 1915 (m3Psi1915) in 23S rRNA. The chain is Ribosomal RNA large subunit methyltransferase H from Clostridium botulinum (strain Kyoto / Type A2).